Consider the following 101-residue polypeptide: Urease subunit gamma (101 aa).

The protein belongs to the urease gamma subunit family. Heterotrimer of UreA (gamma), UreB (beta) and UreC (alpha) subunits. Three heterotrimers associate to form the active enzyme.

The protein localises to the cytoplasm. The enzyme catalyses urea + 2 H2O + H(+) = hydrogencarbonate + 2 NH4(+). It participates in nitrogen metabolism; urea degradation; CO(2) and NH(3) from urea (urease route): step 1/1. The sequence is that of Urease subunit gamma from Ureaplasma urealyticum serovar 10 (strain ATCC 33699 / Western).